Here is a 324-residue protein sequence, read N- to C-terminus: Quinolinate synthase (324 aa).

Residues H39 and S56 each contribute to the iminosuccinate site. C101 serves as a coordination point for [4Fe-4S] cluster. Iminosuccinate-binding positions include 127-129 (YIN) and S144. C187 provides a ligand contact to [4Fe-4S] cluster. Iminosuccinate-binding positions include 213–215 (HPE) and T230. C280 contacts [4Fe-4S] cluster.

It belongs to the quinolinate synthase family. Type 2 subfamily. [4Fe-4S] cluster is required as a cofactor.

It is found in the cytoplasm. The catalysed reaction is iminosuccinate + dihydroxyacetone phosphate = quinolinate + phosphate + 2 H2O + H(+). The protein operates within cofactor biosynthesis; NAD(+) biosynthesis; quinolinate from iminoaspartate: step 1/1. Its function is as follows. Catalyzes the condensation of iminoaspartate with dihydroxyacetone phosphate to form quinolinate. In Trichormus variabilis (strain ATCC 29413 / PCC 7937) (Anabaena variabilis), this protein is Quinolinate synthase.